A 115-amino-acid chain; its full sequence is Large ribosomal subunit protein P2 (115 aa).

Met-1 bears the N-acetylmethionine mark. Residues Ser-17 and Ser-19 each carry the phosphoserine modification. At Lys-21 the chain carries N6-acetyllysine; alternate. An N6-succinyllysine; alternate modification is found at Lys-21. The span at 76 to 90 (APGSAAPAAGSAPAA) shows a compositional bias: low complexity. The disordered stretch occupies residues 76 to 115 (APGSAAPAAGSAPAAAEEKKEEKKEESEESDDDMGFGLFD). A phosphoserine mark is found at Ser-79 and Ser-86. Residues 91–101 (AEEKKEEKKEE) are compositionally biased toward basic and acidic residues. 2 positions are modified to phosphoserine: Ser-102 and Ser-105.

It belongs to the eukaryotic ribosomal protein P1/P2 family. In terms of assembly, heterodimer with RPLP1 at the lateral ribosomal stalk of the large ribosomal subunit.

Functionally, plays an important role in the elongation step of protein synthesis. This is Large ribosomal subunit protein P2 (RPLP2) from Bos taurus (Bovine).